A 245-amino-acid polypeptide reads, in one-letter code: 1-(5-phosphoribosyl)-5-[(5-phosphoribosylamino)methylideneamino] imidazole-4-carboxamide isomerase (245 aa).

Catalysis depends on D7, which acts as the Proton acceptor. D129 (proton donor) is an active-site residue.

This sequence belongs to the HisA/HisF family.

It localises to the cytoplasm. The catalysed reaction is 1-(5-phospho-beta-D-ribosyl)-5-[(5-phospho-beta-D-ribosylamino)methylideneamino]imidazole-4-carboxamide = 5-[(5-phospho-1-deoxy-D-ribulos-1-ylimino)methylamino]-1-(5-phospho-beta-D-ribosyl)imidazole-4-carboxamide. It participates in amino-acid biosynthesis; L-histidine biosynthesis; L-histidine from 5-phospho-alpha-D-ribose 1-diphosphate: step 4/9. The protein is 1-(5-phosphoribosyl)-5-[(5-phosphoribosylamino)methylideneamino] imidazole-4-carboxamide isomerase of Escherichia coli O45:K1 (strain S88 / ExPEC).